A 257-amino-acid polypeptide reads, in one-letter code: UPF0246 protein SO_3540 (257 aa).

Belongs to the UPF0246 family.

This Shewanella oneidensis (strain ATCC 700550 / JCM 31522 / CIP 106686 / LMG 19005 / NCIMB 14063 / MR-1) protein is UPF0246 protein SO_3540.